A 26-amino-acid chain; its full sequence is Somatostatin-1 (26 aa).

Cys15 and Cys26 are joined by a disulfide.

It belongs to the somatostatin family.

It localises to the secreted. Somatostatin inhibits the release of somatotropin. This is Somatostatin-1 (sst1) from Amia calva (Bowfin).